Here is a 109-residue protein sequence, read N- to C-terminus: Glutaredoxin 4 (109 aa).

The Glutaredoxin domain maps to L4–Y106. K21 lines the glutathione pocket. [2Fe-2S] cluster is bound at residue C29. Residues R58, F70, and C83–D84 contribute to the glutathione site.

Belongs to the glutaredoxin family. Monothiol subfamily. As to quaternary structure, homodimer.

The protein localises to the cytoplasm. Functionally, monothiol glutaredoxin involved in the biogenesis of iron-sulfur clusters. The protein is Glutaredoxin 4 (grxD) of Pasteurella multocida (strain Pm70).